The chain runs to 271 residues: TIP41-like protein (271 aa).

Lys-106 is subject to N6-acetyllysine. An interaction with PPP2CA region spans residues 173 to 271 (RVMPSSFFLL…PVDSQSTPSE (99 aa)). Residues Ser-265 and Ser-270 each carry the phosphoserine modification.

Belongs to the TIP41 family. As to quaternary structure, interacts with PPP2CA. Interacts with PPP2CB, PPP4C and PPP6C. Interacts with IGBP1; the interaction is dependent on PPP2CA. Associates with a protein phosphatase 2A PP2A(C):IGBP1 complex. Interacts with PPP4C and PPP4R2.

It is found in the cytoplasm. In terms of biological role, may be a allosteric regulator of serine/threonine-protein phosphatase 2A (PP2A). Inhibits catalytic activity of the PP2A(D) core complex in vitro. The PP2A(C):TIPRL complex does not show phosphatase activity. Acts as a negative regulator of serine/threonine-protein phosphatase 4 probably by inhibiting the formation of the active PPP4C:PPP4R2 complex; the function is proposed to implicate it in DNA damage response by promoting H2AX phosphorylated on Ser-140 (gamma-H2AX). May play a role in the regulation of ATM/ATR signaling pathway controlling DNA replication and repair. This chain is TIP41-like protein (Tiprl), found in Mus musculus (Mouse).